We begin with the raw amino-acid sequence, 61 residues long: MAKKALVNKAAGKPRFAVRAYTRCSKCGRPRAVYRKFGLCRICLREMAHAGELPGVQKSSW.

4 residues coordinate Zn(2+): Cys24, Cys27, Cys40, and Cys43.

It belongs to the universal ribosomal protein uS14 family. Zinc-binding uS14 subfamily. As to quaternary structure, part of the 30S ribosomal subunit. Contacts proteins S3 and S10. It depends on Zn(2+) as a cofactor.

Its function is as follows. Binds 16S rRNA, required for the assembly of 30S particles and may also be responsible for determining the conformation of the 16S rRNA at the A site. The sequence is that of Small ribosomal subunit protein uS14B from Mycobacterium bovis (strain ATCC BAA-935 / AF2122/97).